The primary structure comprises 701 residues: Translation initiation factor IF-2 (701 aa).

A compositionally biased stretch (basic and acidic residues) spans 48 to 62; the sequence is KIYKPEKAEQSEKSQ. A disordered region spans residues 48 to 123; that stretch reads KIYKPEKAEQ…EPKEMPSKIT (76 aa). Composition is skewed to low complexity over residues 63-89 and 97-109; these read QKNTQNKQQTTHNKGNQSNKGNQNNKP and NNKNNKNNKNNKQ. Basic and acidic residues predominate over residues 110–119; sequence PKQEEPKEMP. The region spanning 203–372 is the tr-type G domain; it reads ERPAVVTIMG…VLTSEVQELK (170 aa). Positions 212–219 are G1; sequence GHVDHGKT. 212–219 contacts GTP; sequence GHVDHGKT. Residues 237–241 are G2; sequence GITQH. The tract at residues 258–261 is G3; that stretch reads DTPG. GTP-binding positions include 258-262 and 312-315; these read DTPGH and NKID. Residues 312–315 form a G4 region; the sequence is NKID. The segment at 348 to 350 is G5; that stretch reads SAL.

This sequence belongs to the TRAFAC class translation factor GTPase superfamily. Classic translation factor GTPase family. IF-2 subfamily.

Its subcellular location is the cytoplasm. One of the essential components for the initiation of protein synthesis. Protects formylmethionyl-tRNA from spontaneous hydrolysis and promotes its binding to the 30S ribosomal subunits. Also involved in the hydrolysis of GTP during the formation of the 70S ribosomal complex. The chain is Translation initiation factor IF-2 from Staphylococcus saprophyticus subsp. saprophyticus (strain ATCC 15305 / DSM 20229 / NCIMB 8711 / NCTC 7292 / S-41).